The following is a 60-amino-acid chain: Potassium channel toxin alpha-KTx 15.8 (60 aa).

The first 22 residues, 1 to 22 (MKFSSIILLTLLICSMSIFGNC), serve as a signal peptide directing secretion. Pyrrolidone carboxylic acid is present on Gln-23. 3 cysteine pairs are disulfide-bonded: Cys-30–Cys-50, Cys-35–Cys-55, and Cys-39–Cys-57.

Belongs to the short scorpion toxin superfamily. Potassium channel inhibitor family. Alpha-KTx 15 subfamily. As to expression, expressed by the venom gland.

It is found in the secreted. Blocker of A-type voltage-gated potassium channels of cerebellar granular cells. May also inhibit Kv4/KCND when coexpressed with DPP6 or DPP10. The occlusion of the outer entry of the K(+) conducting pore is partially reversible and affects both open and closed channels. It shares the same target in rat brain than BmTX3 (AC Q8I0L5) and AmmTX3 (AC P60208). Also shows a weak inhibition on Kv1.2/KCNA2 and Kv1.3/KCNA3 voltage-gated potassium channels. The polypeptide is Potassium channel toxin alpha-KTx 15.8 (Olivierus martensii (Manchurian scorpion)).